The chain runs to 407 residues: Methylthioribose kinase (407 aa).

Residues Asn40, Lys57, and 111–113 (EDL) each bind ATP. Position 229 (Asp229) interacts with substrate. Position 246-248 (246-248 (DAE)) interacts with ATP. A substrate-binding site is contributed by Arg344.

The protein belongs to the methylthioribose kinase family. Homodimer.

The catalysed reaction is 5-(methylsulfanyl)-D-ribose + ATP = 5-(methylsulfanyl)-alpha-D-ribose 1-phosphate + ADP + H(+). It participates in amino-acid biosynthesis; L-methionine biosynthesis via salvage pathway; S-methyl-5-thio-alpha-D-ribose 1-phosphate from S-methyl-5'-thioadenosine (hydrolase route): step 2/2. In terms of biological role, catalyzes the phosphorylation of methylthioribose into methylthioribose-1-phosphate. The sequence is that of Methylthioribose kinase from Yersinia pestis bv. Antiqua (strain Angola).